A 363-amino-acid polypeptide reads, in one-letter code: Probable aminomethyltransferase (363 aa).

This sequence belongs to the GcvT family. In terms of assembly, the glycine cleavage system is composed of four proteins: P, T, L and H.

It catalyses the reaction N(6)-[(R)-S(8)-aminomethyldihydrolipoyl]-L-lysyl-[protein] + (6S)-5,6,7,8-tetrahydrofolate = N(6)-[(R)-dihydrolipoyl]-L-lysyl-[protein] + (6R)-5,10-methylene-5,6,7,8-tetrahydrofolate + NH4(+). Its function is as follows. The glycine cleavage system catalyzes the degradation of glycine. In Haloarcula marismortui (strain ATCC 43049 / DSM 3752 / JCM 8966 / VKM B-1809) (Halobacterium marismortui), this protein is Probable aminomethyltransferase.